A 314-amino-acid polypeptide reads, in one-letter code: Porphobilinogen deaminase (314 aa).

At Cys-242 the chain carries S-(dipyrrolylmethanemethyl)cysteine.

This sequence belongs to the HMBS family. In terms of assembly, monomer. The cofactor is dipyrromethane.

It carries out the reaction 4 porphobilinogen + H2O = hydroxymethylbilane + 4 NH4(+). It functions in the pathway porphyrin-containing compound metabolism; protoporphyrin-IX biosynthesis; coproporphyrinogen-III from 5-aminolevulinate: step 2/4. Its function is as follows. Tetrapolymerization of the monopyrrole PBG into the hydroxymethylbilane pre-uroporphyrinogen in several discrete steps. The chain is Porphobilinogen deaminase (hemC) from Bacillus subtilis (strain 168).